The primary structure comprises 343 residues: Glyceraldehyde-3-phosphate dehydrogenase (343 aa).

NAD(+) is bound by residues 12–13 and Gly114; that span reads SI. 143–145 serves as a coordination point for D-glyceraldehyde 3-phosphate; sequence SCN. Cys144 serves as the catalytic Nucleophile. Arg172 lines the NAD(+) pocket. 198 to 199 contacts D-glyceraldehyde 3-phosphate; that stretch reads HG. An NAD(+)-binding site is contributed by Gln307.

This sequence belongs to the glyceraldehyde-3-phosphate dehydrogenase family. Homotetramer.

It is found in the cytoplasm. The catalysed reaction is D-glyceraldehyde 3-phosphate + phosphate + NADP(+) = (2R)-3-phospho-glyceroyl phosphate + NADPH + H(+). The enzyme catalyses D-glyceraldehyde 3-phosphate + phosphate + NAD(+) = (2R)-3-phospho-glyceroyl phosphate + NADH + H(+). The protein operates within carbohydrate degradation; glycolysis; pyruvate from D-glyceraldehyde 3-phosphate: step 1/5. This Methanocaldococcus jannaschii (strain ATCC 43067 / DSM 2661 / JAL-1 / JCM 10045 / NBRC 100440) (Methanococcus jannaschii) protein is Glyceraldehyde-3-phosphate dehydrogenase (gap).